Here is a 270-residue protein sequence, read N- to C-terminus: Eukaryotic translation initiation factor 3 subunit G-1 (270 aa).

An RRM domain is found at 189–267 (AAIRISNLSE…LILSVEWSKP (79 aa)).

Belongs to the eIF-3 subunit G family. As to quaternary structure, component of the eukaryotic translation initiation factor 3 (eIF-3) complex. The eIF-3 complex interacts with pix.

Its subcellular location is the cytoplasm. Its function is as follows. RNA-binding component of the eukaryotic translation initiation factor 3 (eIF-3) complex, which is involved in protein synthesis of a specialized repertoire of mRNAs and, together with other initiation factors, stimulates binding of mRNA and methionyl-tRNAi to the 40S ribosome. The eIF-3 complex specifically targets and initiates translation of a subset of mRNAs involved in cell proliferation. This subunit can bind 18S rRNA. This chain is Eukaryotic translation initiation factor 3 subunit G-1, found in Drosophila ananassae (Fruit fly).